The primary structure comprises 104 residues: Small ribosomal subunit protein uS10 (104 aa).

It belongs to the universal ribosomal protein uS10 family. Part of the 30S ribosomal subunit.

Functionally, involved in the binding of tRNA to the ribosomes. This is Small ribosomal subunit protein uS10 from Buchnera aphidicola subsp. Baizongia pistaciae (strain Bp).